A 331-amino-acid polypeptide reads, in one-letter code: 6-phosphogluconolactonase (331 aa).

Belongs to the cycloisomerase 2 family.

It catalyses the reaction 6-phospho-D-glucono-1,5-lactone + H2O = 6-phospho-D-gluconate + H(+). It functions in the pathway carbohydrate degradation; pentose phosphate pathway; D-ribulose 5-phosphate from D-glucose 6-phosphate (oxidative stage): step 2/3. Catalyzes the hydrolysis of 6-phosphogluconolactone to 6-phosphogluconate. The protein is 6-phosphogluconolactonase of Salmonella choleraesuis (strain SC-B67).